Reading from the N-terminus, the 311-residue chain is MTESVTVAELVKANRLDVYTGKDNLDRKITTSDISRPGLELTGYFNYYPAKRVQLLGITETSFAKGMSHKELLNVMRKMCQPETPAFVISTQLDPPEELTQSAEEAGIPILGTKLTTSRVLSNMTNFLEGKLAERQSVHGVLVDIYGVGVMITGDSGVGKSETALELVKRGHRLIADDRVEVYQQDEQTLVGAAPAILSHLLEIRGIGIIDVMNLFGAGAVRSETDIDLIVHLELWQDDNHFDRLGNNSETQRFFDVVVPKISIPVKTGRNLAIIIEAAAMNFRARSMGYDATKVFDDNLKRLIKQNANKS.

Catalysis depends on residues His-139 and Lys-160. 154–161 lines the ATP pocket; that stretch reads GDSGVGKS. Ser-161 contacts Mg(2+). The active-site Proton acceptor; for phosphorylation activity. Proton donor; for dephosphorylation activity is the Asp-178. The interval 202–211 is important for the catalytic mechanism of both phosphorylation and dephosphorylation; sequence LEIRGIGIID. Glu-203 contributes to the Mg(2+) binding site. Arg-244 is an active-site residue. Residues 265 to 270 are important for the catalytic mechanism of dephosphorylation; sequence PVKTGR.

This sequence belongs to the HPrK/P family. As to quaternary structure, homohexamer. The cofactor is Mg(2+).

It catalyses the reaction [HPr protein]-L-serine + ATP = [HPr protein]-O-phospho-L-serine + ADP + H(+). It carries out the reaction [HPr protein]-O-phospho-L-serine + phosphate + H(+) = [HPr protein]-L-serine + diphosphate. Catalyzes the ATP- as well as the pyrophosphate-dependent phosphorylation of a specific serine residue in HPr, a phosphocarrier protein of the phosphoenolpyruvate-dependent sugar phosphotransferase system (PTS). HprK/P also catalyzes the pyrophosphate-producing, inorganic phosphate-dependent dephosphorylation (phosphorolysis) of seryl-phosphorylated HPr (P-Ser-HPr). The two antagonistic activities of HprK/P are regulated by several intracellular metabolites, which change their concentration in response to the absence or presence of rapidly metabolisable carbon sources (glucose, fructose, etc.) in the growth medium. Therefore, by controlling the phosphorylation state of HPr, HPrK/P is a sensor enzyme that plays a major role in the regulation of carbon metabolism and sugar transport: it mediates carbon catabolite repression (CCR), and regulates PTS-catalyzed carbohydrate uptake and inducer exclusion. The sequence is that of HPr kinase/phosphorylase from Levilactobacillus brevis (strain ATCC 367 / BCRC 12310 / CIP 105137 / JCM 1170 / LMG 11437 / NCIMB 947 / NCTC 947) (Lactobacillus brevis).